The following is a 328-amino-acid chain: Versiconal hemiacetal acetate esterase (328 aa).

The short motif at 82-84 (HGG) is the Involved in the stabilization of the negatively charged intermediate by the formation of the oxyanion hole element. Residues serine 156, aspartate 260, and histidine 290 contribute to the active site.

It belongs to the 'GDXG' lipolytic enzyme family.

It catalyses the reaction (2S,3S)-versiconal hemiacetal acetate + H2O = (2S-3S)-versiconal hemiacetal + acetate + H(+). The catalysed reaction is (3S)-versiconol acetate + H2O = (S)-versiconol + acetate + H(+). The protein operates within mycotoxin biosynthesis. Functionally, versiconal hemiacetal acetate esterase; part of the fragmented gene cluster that mediates the biosynthesis of dothistromin (DOTH), a polyketide toxin very similar in structure to the aflatoxin precursor, versicolorin B. The first step of the pathway is the conversion of acetate to norsolorinic acid (NOR) and requires the fatty acid synthase subunits hexA and hexB, as well as the polyketide synthase pksA. PksA combines a hexanoyl starter unit and 7 malonyl-CoA extender units to synthesize the precursor NOR. The hexanoyl starter unit is provided to the acyl-carrier protein (ACP) domain by the fungal fatty acid synthase hexA/hexB. The second step is the conversion of NOR to averantin (AVN) and requires the norsolorinic acid ketoreductase nor1, which catalyzes the dehydration of norsolorinic acid to form (1'S)-averantin. The cytochrome P450 monooxygenase avnA then catalyzes the hydroxylation of AVN to 5'hydroxyaverantin (HAVN). The next step is performed by adhA that transforms HAVN to averufin (AVF). Averufin might then be converted to hydroxyversicolorone by cypX and avfA. Hydroxyversicolorone is further converted versiconal hemiacetal acetate (VHA) by moxY. VHA is then the substrate for the versiconal hemiacetal acetate esterase est1 to yield versiconal (VAL). Versicolorin B synthase vbsA then converts VAL to versicolorin B (VERB) by closing the bisfuran ring. Then, the activity of the versicolorin B desaturase verB leads to versicolorin A (VERA). DotB, a predicted chloroperoxidase, may perform epoxidation of the A-ring of VERA. Alternatively, a cytochrome P450, such as cypX or avnA could catalyze this step. It is also possible that another, uncharacterized, cytochrome P450 enzyme is responsible for this step. Opening of the epoxide could potentially be achieved by the epoxide hydrolase epoA. However, epoA seems not to be required for DOTH biosynthesis, but other epoxide hydrolases may have the ability to complement this hydrolysis. Alternatively, opening of the epoxide ring could be achieved non-enzymatically. The next step is the deoxygenation of ring A to yield the 5,8-dihydroxyanthraquinone which is most likely catalyzed by the NADPH dehydrogenase encoded by ver1. The last stages of DOTH biosynthesis are proposed to involve hydroxylation of the bisfuran. OrdB and norB might have oxidative roles here. An alternative possibility is that cytochrome P450 monoogenases such as avnA and cypX might perform these steps in addition to previously proposed steps. This is Versiconal hemiacetal acetate esterase from Dothistroma septosporum (strain NZE10 / CBS 128990) (Red band needle blight fungus).